Reading from the N-terminus, the 382-residue chain is D-galactonate dehydratase (382 aa).

Residue D183 coordinates Mg(2+). H185 serves as the catalytic Proton donor. The Mg(2+) site is built by E209 and E235. The active-site Proton acceptor is H285.

This sequence belongs to the mandelate racemase/muconate lactonizing enzyme family. GalD subfamily. Mg(2+) serves as cofactor.

It catalyses the reaction D-galactonate = 2-dehydro-3-deoxy-D-galactonate + H2O. It participates in carbohydrate acid metabolism; D-galactonate degradation; D-glyceraldehyde 3-phosphate and pyruvate from D-galactonate: step 1/3. In terms of biological role, catalyzes the dehydration of D-galactonate to 2-keto-3-deoxy-D-galactonate. This chain is D-galactonate dehydratase, found in Escherichia fergusonii (strain ATCC 35469 / DSM 13698 / CCUG 18766 / IAM 14443 / JCM 21226 / LMG 7866 / NBRC 102419 / NCTC 12128 / CDC 0568-73).